A 318-amino-acid chain; its full sequence is Transaldolase (318 aa).

Catalysis depends on Lys126, which acts as the Schiff-base intermediate with substrate.

Belongs to the transaldolase family. Type 1 subfamily. Homodimer.

The protein localises to the cytoplasm. The catalysed reaction is D-sedoheptulose 7-phosphate + D-glyceraldehyde 3-phosphate = D-erythrose 4-phosphate + beta-D-fructose 6-phosphate. It functions in the pathway carbohydrate degradation; pentose phosphate pathway; D-glyceraldehyde 3-phosphate and beta-D-fructose 6-phosphate from D-ribose 5-phosphate and D-xylulose 5-phosphate (non-oxidative stage): step 2/3. Its function is as follows. Transaldolase is important for the balance of metabolites in the pentose-phosphate pathway. This is Transaldolase from Cupriavidus metallidurans (strain ATCC 43123 / DSM 2839 / NBRC 102507 / CH34) (Ralstonia metallidurans).